Here is a 116-residue protein sequence, read N- to C-terminus: Large ribosomal subunit protein uL14m (116 aa).

It belongs to the universal ribosomal protein uL14 family.

It localises to the mitochondrion. In Acanthamoeba polyphaga (Amoeba), this protein is Large ribosomal subunit protein uL14m (RPL14).